We begin with the raw amino-acid sequence, 348 residues long: Probable UDP-arabinopyranose mutase 5 (348 aa).

The DXD motif signature appears at 100–102; sequence DDD. Residue R148 is glycosylated (N-linked (Glc...) arginine).

It belongs to the RGP family. In terms of assembly, heteromers with RGP1 and RGP2. The cofactor is Mn(2+). Mg(2+) serves as cofactor. Post-translationally, reversibly glycosylated in vitro by UDP-glucose, UDP-xylose and UDP-galactose, but not UDP-mannose. As to expression, widely expressed at low levels.

Its subcellular location is the cytoplasm. The protein localises to the cytosol. It is found in the golgi apparatus. It catalyses the reaction UDP-beta-L-arabinofuranose = UDP-beta-L-arabinopyranose. Functionally, probable UDP-L-arabinose mutase involved in the biosynthesis of cell wall non-cellulosic polysaccharides. In Arabidopsis thaliana (Mouse-ear cress), this protein is Probable UDP-arabinopyranose mutase 5.